Consider the following 356-residue polypeptide: Fructose import permease protein FruF (356 aa).

Transmembrane regions (helical) follow at residues 25 to 45, 77 to 97, 113 to 133, 180 to 200, 231 to 251, 268 to 290, and 308 to 328; these read IVAF…FLAL, LVIS…VAGA, ILIA…LVSF, FILG…LVGL, ILFL…LFAT, MYAI…SLAG, and LGVN…VICV.

The protein belongs to the binding-protein-dependent transport system permease family. The complex is composed of an ATP-binding protein (FruK), two transmembrane proteins (FruF and FruG) and a solute-binding protein (FruE).

It localises to the cell membrane. Functionally, part of the high-affinity ABC transporter complex FruEKFG involved in fructose uptake. Can also transport ribose and xylose, with lower affinity. Probably responsible for the translocation of the substrate across the membrane. The polypeptide is Fructose import permease protein FruF (Bifidobacterium longum (strain NCC 2705)).